The following is a 508-amino-acid chain: Hydroxymethylglutaryl-CoA synthase, mitochondrial (508 aa).

The N-terminal 37 residues, 1–37 (MQRLLTPVRQVLQVKRVMQEASLLPARLLPAAHPSFS), are a transit peptide targeting the mitochondrion. N6-succinyllysine is present on Lys52. (3S)-3-hydroxy-3-methylglutaryl-CoA is bound by residues Glu80 and Ala81. Glu132 (proton donor/acceptor) is an active-site residue. Residues Cys166, Asn204, and Thr208 each coordinate (3S)-3-hydroxy-3-methylglutaryl-CoA. Cys166 acts as the Acyl-thioester intermediate in catalysis. N6-acetyllysine is present on Lys243. N6-acetyllysine; alternate is present on Lys256. Lys256 is subject to N6-succinyllysine; alternate. (3S)-3-hydroxy-3-methylglutaryl-CoA is bound by residues Ser258 and His301. The active-site Proton donor/acceptor is His301. At Lys306 the chain carries N6-acetyllysine. Lys310 is a (3S)-3-hydroxy-3-methylglutaryl-CoA binding site. Lys310 carries the N6-acetyllysine; alternate modification. At Lys310 the chain carries N6-succinyllysine; alternate. N6-succinyllysine is present on Lys333. Residues Lys342, Lys350, Lys354, and Lys358 each carry the N6-acetyllysine; alternate modification. N6-succinyllysine; alternate occurs at positions 342, 350, 354, and 358. Residues Asn380 and Ser414 each contribute to the (3S)-3-hydroxy-3-methylglutaryl-CoA site. Residue Ser433 is modified to Phosphoserine. Lys437 bears the N6-acetyllysine mark. Residue Ser440 is modified to Phosphoserine. Residue Lys447 is modified to N6-acetyllysine; alternate. An N6-succinyllysine; alternate modification is found at Lys447. Ser456 bears the Phosphoserine mark. An N6-acetyllysine; alternate modification is found at Lys473. At Lys473 the chain carries N6-succinyllysine; alternate. At Ser477 the chain carries Phosphoserine.

The protein belongs to the thiolase-like superfamily. HMG-CoA synthase family. Homodimer. Succinylated. Desuccinylated by SIRT5. Succinylation, at least at Lys-310, inhibits the enzymatic activity.

It localises to the mitochondrion. The catalysed reaction is acetoacetyl-CoA + acetyl-CoA + H2O = (3S)-3-hydroxy-3-methylglutaryl-CoA + CoA + H(+). The protein operates within metabolic intermediate biosynthesis; (R)-mevalonate biosynthesis; (R)-mevalonate from acetyl-CoA: step 2/3. Catalyzes the first irreversible step in ketogenesis, condensing acetyl-CoA to acetoacetyl-CoA to form HMG-CoA, which is converted by HMG-CoA reductase (HMGCR) into mevalonate. This Bos taurus (Bovine) protein is Hydroxymethylglutaryl-CoA synthase, mitochondrial (HMGCS2).